We begin with the raw amino-acid sequence, 363 residues long: NAD(P)H-quinone oxidoreductase subunit 1, chloroplastic (363 aa).

Helical transmembrane passes span Leu30 to Leu50, Phe98 to Phe118, Leu127 to Met147, Ala165 to Leu185, Phe203 to Leu223, Tyr248 to Ser268, Val300 to Ile320, and Leu336 to Thr356.

Belongs to the complex I subunit 1 family. As to quaternary structure, NDH is composed of at least 16 different subunits, 5 of which are encoded in the nucleus.

The protein resides in the plastid. Its subcellular location is the chloroplast thylakoid membrane. It catalyses the reaction a plastoquinone + NADH + (n+1) H(+)(in) = a plastoquinol + NAD(+) + n H(+)(out). The catalysed reaction is a plastoquinone + NADPH + (n+1) H(+)(in) = a plastoquinol + NADP(+) + n H(+)(out). In terms of biological role, NDH shuttles electrons from NAD(P)H:plastoquinone, via FMN and iron-sulfur (Fe-S) centers, to quinones in the photosynthetic chain and possibly in a chloroplast respiratory chain. The immediate electron acceptor for the enzyme in this species is believed to be plastoquinone. Couples the redox reaction to proton translocation, and thus conserves the redox energy in a proton gradient. The chain is NAD(P)H-quinone oxidoreductase subunit 1, chloroplastic from Solanum bulbocastanum (Wild potato).